The following is a 422-amino-acid chain: Glucose-1-phosphate adenylyltransferase (422 aa).

Alpha-D-glucose 1-phosphate contacts are provided by residues Tyr-108, Gly-173, 188 to 189 (EK), and Ser-206.

Belongs to the bacterial/plant glucose-1-phosphate adenylyltransferase family. In terms of assembly, homotetramer.

The enzyme catalyses alpha-D-glucose 1-phosphate + ATP + H(+) = ADP-alpha-D-glucose + diphosphate. It participates in glycan biosynthesis; glycogen biosynthesis. In terms of biological role, involved in the biosynthesis of ADP-glucose, a building block required for the elongation reactions to produce glycogen. Catalyzes the reaction between ATP and alpha-D-glucose 1-phosphate (G1P) to produce pyrophosphate and ADP-Glc. This chain is Glucose-1-phosphate adenylyltransferase, found in Paraburkholderia phymatum (strain DSM 17167 / CIP 108236 / LMG 21445 / STM815) (Burkholderia phymatum).